A 189-amino-acid polypeptide reads, in one-letter code: Der GTPase-activating protein YihI (189 aa).

The disordered stretch occupies residues 1–81 (MARKKKTRRV…ALAKKDPRLG (81 aa)). Composition is skewed to basic and acidic residues over residues 9–27 (RVSDIMPARKVDKKVELPK) and 35–46 (TRYELDAKARED). Over residues 60–71 (RHSATENNNNHQ) the composition is skewed to polar residues.

It belongs to the YihI family. As to quaternary structure, interacts with Der.

In terms of biological role, a GTPase-activating protein (GAP) that modifies Der/EngA GTPase function. May play a role in ribosome biogenesis. In Pasteurella multocida (strain Pm70), this protein is Der GTPase-activating protein YihI.